We begin with the raw amino-acid sequence, 190 residues long: Putative manganese efflux pump MntP (190 aa).

Transmembrane regions (helical) follow at residues 3–23 (FLQI…CSVV), 37–57 (LVLA…GWVI), 72–88 (HWIA…KMIW), 111–131 (IILG…LAFV), 138–158 (VALS…WIGH), and 164–184 (FGKW…ANIV).

The protein belongs to the MntP (TC 9.B.29) family.

Its subcellular location is the cell membrane. In terms of biological role, probably functions as a manganese efflux pump. The sequence is that of Putative manganese efflux pump MntP from Corynebacterium glutamicum (strain R).